Consider the following 145-residue polypeptide: Superoxide dismutase [Mn/Fe] (145 aa).

Residues His-10 and His-64 each coordinate Fe(3+). Mn(2+)-binding residues include His-10 and His-64. The disordered stretch occupies residues 126–145 (TSTANQDTPISEGKKPILGL).

This sequence belongs to the iron/manganese superoxide dismutase family. Mn(2+) is required as a cofactor. It depends on Fe(3+) as a cofactor.

It catalyses the reaction 2 superoxide + 2 H(+) = H2O2 + O2. Destroys superoxide anion radicals which are normally produced within the cells and which are toxic to biological systems. Catalyzes the dismutation of superoxide anion radicals into O2 and H2O2 by successive reduction and oxidation of the transition metal ion at the active site. The polypeptide is Superoxide dismutase [Mn/Fe] (sodA) (Streptococcus mitis).